The chain runs to 268 residues: Proliferating cell nuclear antigen (268 aa).

The DNA-binding element occupies R61–K80.

Belongs to the PCNA family.

It is found in the nucleus. Functionally, this protein is an auxiliary protein of DNA polymerase delta and is involved in the control of eukaryotic DNA replication by increasing the polymerase's processibility during elongation of the leading strand. The protein is Proliferating cell nuclear antigen of Catharanthus roseus (Madagascar periwinkle).